We begin with the raw amino-acid sequence, 115 residues long: T cell receptor beta variable 16 (115 aa).

Positions methionine 1 to glycine 20 are cleaved as a signal peptide. The 95-residue stretch at glutamate 21–glutamine 115 folds into the Ig-like domain. The cysteines at positions 42 and 111 are disulfide-linked.

Alpha-beta TR is a heterodimer composed of an alpha and beta chain; disulfide-linked. The alpha-beta TR is associated with the transmembrane signaling CD3 coreceptor proteins to form the TR-CD3 (TcR or TCR). The assembly of alpha-beta TR heterodimers with CD3 occurs in the endoplasmic reticulum where a single alpha-beta TR heterodimer associates with one CD3D-CD3E heterodimer, one CD3G-CD3E heterodimer and one CD247 homodimer forming a stable octameric structure. CD3D-CD3E and CD3G-CD3E heterodimers preferentially associate with TR alpha and TR beta chains, respectively. The association of the CD247 homodimer is the last step of TcR assembly in the endoplasmic reticulum and is required for transport to the cell surface.

Its subcellular location is the cell membrane. In terms of biological role, v region of the variable domain of T cell receptor (TR) beta chain that participates in the antigen recognition. Alpha-beta T cell receptors are antigen specific receptors which are essential to the immune response and are present on the cell surface of T lymphocytes. Recognize peptide-major histocompatibility (MH) (pMH) complexes that are displayed by antigen presenting cells (APC), a prerequisite for efficient T cell adaptive immunity against pathogens. Binding of alpha-beta TR to pMH complex initiates TR-CD3 clustering on the cell surface and intracellular activation of LCK that phosphorylates the ITAM motifs of CD3G, CD3D, CD3E and CD247 enabling the recruitment of ZAP70. In turn ZAP70 phosphorylates LAT, which recruits numerous signaling molecules to form the LAT signalosome. The LAT signalosome propagates signal branching to three major signaling pathways, the calcium, the mitogen-activated protein kinase (MAPK) kinase and the nuclear factor NF-kappa-B (NF-kB) pathways, leading to the mobilization of transcription factors that are critical for gene expression and essential for T cell growth and differentiation. The T cell repertoire is generated in the thymus, by V-(D)-J rearrangement. This repertoire is then shaped by intrathymic selection events to generate a peripheral T cell pool of self-MH restricted, non-autoaggressive T cells. Post-thymic interaction of alpha-beta TR with the pMH complexes shapes TR structural and functional avidity. In Homo sapiens (Human), this protein is T cell receptor beta variable 16.